A 296-amino-acid polypeptide reads, in one-letter code: Tubulin polyglutamylase complex subunit 2 (296 aa).

A disordered region spans residues 257–296; that stretch reads KILIPKKKGPVQPVSGQKGPGPLAPPTSKPSAGCGNPVRK.

In terms of assembly, part of the neuronal tubulin polyglutamylase complex which contains TPGS1, TPGS2, TTLL1, LRRC49 and NICN1. Interacts with CSTPP1 and LRRC49.

It localises to the cytoplasm. Its subcellular location is the cytoskeleton. The protein resides in the microtubule organizing center. It is found in the centrosome. The protein localises to the centriolar satellite. In terms of biological role, subunit of the tubulin polyglutamylase complex (TPGC). The complex mediates cilia and flagella polyglutamylation which is essential for their biogenesis and motility. This is Tubulin polyglutamylase complex subunit 2 (Tpgs2) from Rattus norvegicus (Rat).